Reading from the N-terminus, the 492-residue chain is 2,3-bisphosphoglycerate-independent phosphoglycerate mutase (492 aa).

D11 and S61 together coordinate Mn(2+). The Phosphoserine intermediate role is filled by S61. Substrate-binding positions include H118, R147 to D148, R177, R183, R248 to R251, and K321. Residues D387, H391, D428, H429, and H446 each coordinate Mn(2+).

This sequence belongs to the BPG-independent phosphoglycerate mutase family. In terms of assembly, monomer. Mn(2+) is required as a cofactor.

The enzyme catalyses (2R)-2-phosphoglycerate = (2R)-3-phosphoglycerate. It participates in carbohydrate degradation; glycolysis; pyruvate from D-glyceraldehyde 3-phosphate: step 3/5. Catalyzes the interconversion of 2-phosphoglycerate and 3-phosphoglycerate. The polypeptide is 2,3-bisphosphoglycerate-independent phosphoglycerate mutase (Helicobacter acinonychis (strain Sheeba)).